The chain runs to 159 residues: 2-C-methyl-D-erythritol 2,4-cyclodiphosphate synthase (159 aa).

The a divalent metal cation site is built by aspartate 10 and histidine 12. 4-CDP-2-C-methyl-D-erythritol 2-phosphate-binding positions include 10-12 (DVH) and 36-37 (HS). Residue histidine 44 coordinates a divalent metal cation. 4-CDP-2-C-methyl-D-erythritol 2-phosphate contacts are provided by residues 58 to 60 (DIG), 134 to 137 (TTSE), phenylalanine 141, and arginine 144.

This sequence belongs to the IspF family. Homotrimer. A divalent metal cation serves as cofactor.

The enzyme catalyses 4-CDP-2-C-methyl-D-erythritol 2-phosphate = 2-C-methyl-D-erythritol 2,4-cyclic diphosphate + CMP. It functions in the pathway isoprenoid biosynthesis; isopentenyl diphosphate biosynthesis via DXP pathway; isopentenyl diphosphate from 1-deoxy-D-xylulose 5-phosphate: step 4/6. Functionally, involved in the biosynthesis of isopentenyl diphosphate (IPP) and dimethylallyl diphosphate (DMAPP), two major building blocks of isoprenoid compounds. Catalyzes the conversion of 4-diphosphocytidyl-2-C-methyl-D-erythritol 2-phosphate (CDP-ME2P) to 2-C-methyl-D-erythritol 2,4-cyclodiphosphate (ME-CPP) with a corresponding release of cytidine 5-monophosphate (CMP). This Roseobacter denitrificans (strain ATCC 33942 / OCh 114) (Erythrobacter sp. (strain OCh 114)) protein is 2-C-methyl-D-erythritol 2,4-cyclodiphosphate synthase.